A 531-amino-acid chain; its full sequence is GMP synthase [glutamine-hydrolyzing] (531 aa).

One can recognise a Glutamine amidotransferase type-1 domain in the interval Lys-20 to Asp-213. Cys-97 acts as the Nucleophile in catalysis. Active-site residues include His-187 and Glu-189. The 193-residue stretch at Trp-214–Arg-406 folds into the GMPS ATP-PPase domain. Ser-241–Ala-247 provides a ligand contact to ATP.

As to quaternary structure, homodimer.

The enzyme catalyses XMP + L-glutamine + ATP + H2O = GMP + L-glutamate + AMP + diphosphate + 2 H(+). It participates in purine metabolism; GMP biosynthesis; GMP from XMP (L-Gln route): step 1/1. Catalyzes the synthesis of GMP from XMP. In Afipia carboxidovorans (strain ATCC 49405 / DSM 1227 / KCTC 32145 / OM5) (Oligotropha carboxidovorans), this protein is GMP synthase [glutamine-hydrolyzing].